The chain runs to 273 residues: Gamma-glutamyl cyclotransferase gliK (273 aa).

A helical transmembrane segment spans residues 227–243; that stretch reads WLGWIILTLYGLMWSYH.

This sequence belongs to the class-I pyridoxal-phosphate-dependent aminotransferase family.

It is found in the membrane. It catalyses the reaction an alpha-(gamma-L-glutamyl)-L-amino acid = 5-oxo-L-proline + an L-alpha-amino acid. It participates in mycotoxin biosynthesis. Its function is as follows. Gamma-glutamyl cyclotransferase-like protein; part of the gene cluster that mediates the biosynthesis of gliotoxin, a member of the epipolythiodioxopiperazine (ETP) class of toxins characterized by a disulfide bridged cyclic dipeptide. The first step in gliotoxin biosynthesis is the condensation of serine and phenylalanine to form the cyclo-L-phenylalanyl-L-serine diketopiperazine (DKP) by the NRPS gliP. GliP is also able to produce the DKP cyclo-L-tryptophanyl-L-serine, suggesting that the substrate specificity of the first adenylation (A) domain in gliP is sufficiently relaxed to accommodate both L-Phe and L-Trp. The cytochrome P450 monooxygenase gliC has been shown to catalyze the subsequent hydroxylation of the alpha-carbon of L-Phe in cyclo-L-phenylalanyl-L-serine whereas the second cytochrome P450 enzyme, gliF, is presumably involved in the modification of the DKP side chain. The glutathione S-transferase (GST) gliG then forms a bis-glutathionylated biosynthetic intermediate which is responsible for the sulfurization of gliotoxin. This bis-glutathionylated intermediate is subsequently processed by the gamma-glutamyl cyclotransferase gliK to remove both gamma-glutamyl moieties. Subsequent processing via gliI yields a biosynthetic intermediate, which is N-methylated via the N-methyltransferase gliN, before the gliotoxin oxidoreductase gliT-mediated disulfide bridge closure. GliN-mediated amide methylation confers stability to ETP, damping the spontaneous formation of tri- and tetrasulfides. Intracellular dithiol gliotoxin oxidized by gliT is subsequently effluxed by gliA. Gliotoxin contributes to pathogenesis during invasive aspergillosis. In macrophages and neutrophils, gliotoxin showed inhibition of various different cell functions including cytokine production, antigen presentation, phagocytosis, and production of reactive oxygen species. The chain is Gamma-glutamyl cyclotransferase gliK from Aspergillus fumigatus (strain ATCC MYA-4609 / CBS 101355 / FGSC A1100 / Af293) (Neosartorya fumigata).